We begin with the raw amino-acid sequence, 192 residues long: MKLVVGLGNPGEEYARTRHNVGFVVADRLAQLAGASFTAKKFAAELAEARLGPERVWILKPQTYMNHSGEAVGAALRFWKLGLDDLVVVHDDLELEPFRVQLKVGGGHGGHNGVKSVNAHVGSPEYARVRVGVGRPPPRMDPADYVLGKFAKGEDAELDLCVEQAVEATRLAVELGAAKAMNQVNRRSRAAE.

Y14 contacts tRNA. H19 functions as the Proton acceptor in the catalytic mechanism. The tRNA site is built by Y64, N66, and N112.

The protein belongs to the PTH family. Monomer.

It localises to the cytoplasm. The catalysed reaction is an N-acyl-L-alpha-aminoacyl-tRNA + H2O = an N-acyl-L-amino acid + a tRNA + H(+). In terms of biological role, hydrolyzes ribosome-free peptidyl-tRNAs (with 1 or more amino acids incorporated), which drop off the ribosome during protein synthesis, or as a result of ribosome stalling. Catalyzes the release of premature peptidyl moieties from peptidyl-tRNA molecules trapped in stalled 50S ribosomal subunits, and thus maintains levels of free tRNAs and 50S ribosomes. This is Peptidyl-tRNA hydrolase from Anaeromyxobacter dehalogenans (strain 2CP-C).